The chain runs to 385 residues: MNPVPAQREYFLDSIRAWLMLLGIPFHISLIYSSHTWHVNSAEPSLWLTLFNDFIHSFRMQVFFVISGYFSYMLFLRYPLKKWWKVRVERVGIPMLTAIPLLTLPQFIMLQYVKGKAESWPGLSLYDKYNTLAWELISHLWFLLVLVVMTTLCVWIFKRIRNNLENSDKTNKKFSMVKLSVIFLCLGIGYAVIRRTIFIVYPPILSNGMFNFIVMQTLFYLPFFILGALAFIFPHLKALFTTPSRGSTLAAALAFVAYLLNQRYGSGDAWMYETESVITMVLGLWMVNVVFSFGHRLLNFQSARVTYFVNASLFIYLVHHPLTLFFGAYITPHITSNWLGFLCGLIFVVGIAIILYEIHLRIPLLKFLFSGKPVVKRENDKAPAR.

10 consecutive transmembrane segments (helical) span residues 17 to 37 (AWLMLLGIPFHISLIYSSHTW), 60 to 80 (MQVFFVISGYFSYMLFLRYPL), 91 to 111 (VGIPMLTAIPLLTLPQFIMLQ), 137 to 157 (ISHLWFLLVLVVMTTLCVWIF), 173 to 193 (KFSMVKLSVIFLCLGIGYAVI), 212 to 232 (FIVMQTLFYLPFFILGALAFI), 245 to 262 (RGSTLAAALAFVAYLLNQ), 274 to 294 (TESVITMVLGLWMVNVVFSFG), 311 to 331 (ASLFIYLVHHPLTLFFGAYIT), and 338 to 358 (WLGFLCGLIFVVGIAIILYEI).

This sequence belongs to the acyltransferase 3 family. OpgC subfamily.

The protein resides in the cell membrane. The protein operates within glycan metabolism; osmoregulated periplasmic glucan (OPG) biosynthesis. Functionally, necessary for the succinyl substitution of periplasmic glucans. Could catalyze the transfer of succinyl residues from the cytoplasmic side of the membrane to the nascent glucan backbones on the periplasmic side of the membrane. This is Glucans biosynthesis protein C from Escherichia coli O81 (strain ED1a).